A 285-amino-acid polypeptide reads, in one-letter code: Cyclin-Y-like protein 1B (285 aa).

The region spanning 111–209 is the Cyclin N-terminal domain; sequence PKRNCIFRHF…CFLELLEFNI (99 aa).

The protein belongs to the cyclin family. Cyclin Y subfamily.

The polypeptide is Cyclin-Y-like protein 1B (Homo sapiens (Human)).